Consider the following 239-residue polypeptide: Demethylmenaquinone methyltransferase (239 aa).

S-adenosyl-L-methionine-binding positions include Thr60, Asp81, and 106–107 (DA).

This sequence belongs to the class I-like SAM-binding methyltransferase superfamily. MenG/UbiE family.

It carries out the reaction a 2-demethylmenaquinol + S-adenosyl-L-methionine = a menaquinol + S-adenosyl-L-homocysteine + H(+). Its pathway is quinol/quinone metabolism; menaquinone biosynthesis; menaquinol from 1,4-dihydroxy-2-naphthoate: step 2/2. Functionally, methyltransferase required for the conversion of demethylmenaquinol (DMKH2) to menaquinol (MKH2). This is Demethylmenaquinone methyltransferase from Staphylococcus haemolyticus (strain JCSC1435).